Reading from the N-terminus, the 501-residue chain is ATP synthase subunit alpha (501 aa).

170–177 lines the ATP pocket; the sequence is GDRQTGKS.

It belongs to the ATPase alpha/beta chains family. F-type ATPases have 2 components, CF(1) - the catalytic core - and CF(0) - the membrane proton channel. CF(1) has five subunits: alpha(3), beta(3), gamma(1), delta(1), epsilon(1). CF(0) has three main subunits: a(1), b(2) and c(9-12). The alpha and beta chains form an alternating ring which encloses part of the gamma chain. CF(1) is attached to CF(0) by a central stalk formed by the gamma and epsilon chains, while a peripheral stalk is formed by the delta and b chains.

The protein resides in the cell membrane. It carries out the reaction ATP + H2O + 4 H(+)(in) = ADP + phosphate + 5 H(+)(out). Its function is as follows. Produces ATP from ADP in the presence of a proton gradient across the membrane. The alpha chain is a regulatory subunit. This Acholeplasma laidlawii (strain PG-8A) protein is ATP synthase subunit alpha.